The primary structure comprises 177 residues: Large ribosomal subunit protein uL6 (177 aa).

The span at 152-171 (RPPEPYKGKGVRYDDEEVRR) shows a compositional bias: basic and acidic residues. The disordered stretch occupies residues 152-177 (RPPEPYKGKGVRYDDEEVRRKEAKKK).

Belongs to the universal ribosomal protein uL6 family. Part of the 50S ribosomal subunit.

Its function is as follows. This protein binds to the 23S rRNA, and is important in its secondary structure. It is located near the subunit interface in the base of the L7/L12 stalk, and near the tRNA binding site of the peptidyltransferase center. The sequence is that of Large ribosomal subunit protein uL6 from Shewanella putrefaciens (strain CN-32 / ATCC BAA-453).